The sequence spans 96 residues: Large ribosomal subunit protein uL23 (96 aa).

The protein belongs to the universal ribosomal protein uL23 family. In terms of assembly, part of the 50S ribosomal subunit. Contacts protein L29, and trigger factor when it is bound to the ribosome.

Its function is as follows. One of the early assembly proteins it binds 23S rRNA. One of the proteins that surrounds the polypeptide exit tunnel on the outside of the ribosome. Forms the main docking site for trigger factor binding to the ribosome. In Ruthia magnifica subsp. Calyptogena magnifica, this protein is Large ribosomal subunit protein uL23.